Consider the following 462-residue polypeptide: Chromosomal replication initiator protein DnaA (462 aa).

Residues 1–83 are domain I, interacts with DnaA modulators; it reads MSLSLWQQCL…LRFEVGSKPA (83 aa). The interval 83–125 is domain II; that stretch reads AARAHNNPVTASVSAPVAPVTRSAPMRPSWDNSPAQPELSYRS. The segment at 104–125 is disordered; that stretch reads RSAPMRPSWDNSPAQPELSYRS. Positions 112-125 are enriched in polar residues; sequence WDNSPAQPELSYRS. Residues 126–342 are domain III, AAA+ region; sequence NVNPKHTFDN…GALNRVIANA (217 aa). Residues G170, G172, K173, and T174 each contribute to the ATP site. Positions 343-462 are domain IV, binds dsDNA; sequence NFTGRAITID…FSNLIRTLSS (120 aa).

It belongs to the DnaA family. Oligomerizes as a right-handed, spiral filament on DNA at oriC.

The protein localises to the cytoplasm. In terms of biological role, plays an essential role in the initiation and regulation of chromosomal replication. ATP-DnaA binds to the origin of replication (oriC) to initiate formation of the DNA replication initiation complex once per cell cycle. Binds the DnaA box (a 9 base pair repeat at the origin) and separates the double-stranded (ds)DNA. Forms a right-handed helical filament on oriC DNA; dsDNA binds to the exterior of the filament while single-stranded (ss)DNA is stabiized in the filament's interior. The ATP-DnaA-oriC complex binds and stabilizes one strand of the AT-rich DNA unwinding element (DUE), permitting loading of DNA polymerase. After initiation quickly degrades to an ADP-DnaA complex that is not apt for DNA replication. Binds acidic phospholipids. The protein is Chromosomal replication initiator protein DnaA of Yersinia pseudotuberculosis serotype O:1b (strain IP 31758).